Reading from the N-terminus, the 273-residue chain is Ribosomal RNA small subunit methyltransferase A (273 aa).

6 residues coordinate S-adenosyl-L-methionine: N18, L20, G45, E66, D91, and N113.

It belongs to the class I-like SAM-binding methyltransferase superfamily. rRNA adenine N(6)-methyltransferase family. RsmA subfamily.

Its subcellular location is the cytoplasm. The enzyme catalyses adenosine(1518)/adenosine(1519) in 16S rRNA + 4 S-adenosyl-L-methionine = N(6)-dimethyladenosine(1518)/N(6)-dimethyladenosine(1519) in 16S rRNA + 4 S-adenosyl-L-homocysteine + 4 H(+). Specifically dimethylates two adjacent adenosines (A1518 and A1519) in the loop of a conserved hairpin near the 3'-end of 16S rRNA in the 30S particle. May play a critical role in biogenesis of 30S subunits. This is Ribosomal RNA small subunit methyltransferase A from Shigella boydii serotype 4 (strain Sb227).